The chain runs to 447 residues: MSFDRKDIGIKGLVLYTPNQYVEQAALEAHDGVSTGKYTIGLGLTKMAFVDDREDIYSFGLTALSQLIKRYQIDISKIGRLEVGTETIIDKSKSVKSVLMQLFGDNHNVEGIDCVNACYGGVNALFNTIDWIESSAWDGRDGIVVAGDIALYAKGNARPTGGAGCVALLVGPNAPIVFEPGLRGTYMQHAYDFYKPDLTSEYPYVDGHFSLECYVKALDGAYANYNVRDVAKNGKSQGLGLDRFDYCIFHAPTCKQVQKAYARLLYTDSAAEPSNPELEGVRELLSTLDAKKSLTDKALEKGLMAITKERFNKRVSPSVYAPTNCGNMYTASIFSCLTALLSRVPADELKGKRVGAYSYGSGLAASFFSFVVKGDVSEIAKKTNLVNDLDNRHCLTPTQYEEAIELRHQAHLKKNFTPKGSIERLRSGTYYLTGIDDMFRRSYSVKP.

The Proton donor/acceptor role is filled by Glu86. Catalysis depends on Cys118, which acts as the Acyl-thioester intermediate. Residues Cys118, Asn156, Thr160, Ser210, His250, Lys259, Asn327, and Ser361 each contribute to the (3S)-3-hydroxy-3-methylglutaryl-CoA site. His250 serves as the catalytic Proton donor/acceptor. A Phosphothreonine modification is found at Thr398.

Belongs to the thiolase-like superfamily. HMG-CoA synthase family.

The enzyme catalyses acetoacetyl-CoA + acetyl-CoA + H2O = (3S)-3-hydroxy-3-methylglutaryl-CoA + CoA + H(+). It functions in the pathway metabolic intermediate biosynthesis; (R)-mevalonate biosynthesis; (R)-mevalonate from acetyl-CoA: step 2/3. Functionally, hydroxymethylglutaryl-CoA synthase; part of the first module of ergosterol biosynthesis pathway that includes the early steps of the pathway, conserved across all eukaryotes, and which results in the formation of mevalonate from acetyl-coenzyme A (acetyl-CoA). Hcs1 condenses acetyl-CoA with acetoacetyl-CoA to form hydroxymethylglutaryl-CoA (HMG-CoA). The first module starts with the action of the cytosolic acetyl-CoA acetyltransferase eg10 that catalyzes the formation of acetoacetyl-CoA. The hydroxymethylglutaryl-CoA synthases erg13 then condenses acetyl-CoA with acetoacetyl-CoA to form HMG-CoA. The rate-limiting step of the early module is the reduction to mevalonate by the 3-hydroxy-3-methylglutaryl-coenzyme A (HMG-CoA) reductases hcs1. The chain is Hydroxymethylglutaryl-CoA synthase from Schizosaccharomyces pombe (strain 972 / ATCC 24843) (Fission yeast).